We begin with the raw amino-acid sequence, 333 residues long: cGAMP-activated phospholipase (333 aa).

Residues leucine 10 to leucine 191 enclose the PNPLA domain. The GXGXXG signature appears at glycine 14–glycine 19. The short motif at glycine 46 to glycine 50 is the GXSXG element. The active-site Nucleophile is the serine 48. The Proton acceptor role is filled by aspartate 178. A DGA/G motif is present at residues aspartate 178 to glycine 180.

The protein belongs to the patatin family.

It carries out the reaction a 1,2-diacyl-sn-glycero-3-phosphocholine + H2O = a 2-acyl-sn-glycero-3-phosphocholine + a fatty acid + H(+). It catalyses the reaction 1,2-di-(9Z-octadecenoyl)-sn-glycero-3-phosphoethanolamine + 2 H2O = sn-glycero-3-phosphoethanolamine + 2 (9Z)-octadecenoate + 2 H(+). Its activity is regulated as follows. Phospholipase activity is specifically activated upon cGAMP binding, which is produced by the cognate cyclic nucleotide synthase encoded in the same operon. Is not activated by cyclic dinucleotides 2',3'-cGAMP, c-diAMP or 3',3'-c-diGMP. Functionally, effector phospholipase of a CBASS antiviral system. CBASS (cyclic oligonucleotide-based antiphage signaling system) provides immunity against bacteriophages. The CD-NTase protein (CdnA) synthesizes cyclic nucleotides in response to infection; these serve as specific second messenger signals. The signals activate a diverse range of effectors, leading to bacterial cell death and thus abortive phage infection. A type II-A(GA) CBASS system. Its function is as follows. Phospholipase that is activated upon binding to the cyclic dinucleotide (CDN) second messenger 3',3'-cyclic GMP-AMP (cGAMP). Degrades phospholipids in the cell membrane. The capV-cdnA-cap2-cap3 operon provides about 10(4)-fold protection in strain BWHPSA011 against infection by phage PaMx41. In P.aeruginosa strain PAO1 it confers protection against phages PaMx41 and JBD18 but not JBD67 (JBD18 and JBD67 do not replicate in BWHPSA011 / Pa011). When acb2 in JBD67 is deleted this CBASS operon then protects against JDB67 also. This CBASS system limits prophage induction of lysogenized JBD67 as well as viral lytic replication. This is cGAMP-activated phospholipase from Pseudomonas aeruginosa (strain BWHPSA011 / Pa011).